Here is a 396-residue protein sequence, read N- to C-terminus: Alanine racemase (396 aa).

Residue K46 is the Proton acceptor; specific for D-alanine of the active site. K46 bears the N6-(pyridoxal phosphate)lysine mark. R145 provides a ligand contact to substrate. Y280 acts as the Proton acceptor; specific for L-alanine in catalysis. Position 328 (M328) interacts with substrate.

Belongs to the alanine racemase family. It depends on pyridoxal 5'-phosphate as a cofactor.

The enzyme catalyses L-alanine = D-alanine. It functions in the pathway amino-acid biosynthesis; D-alanine biosynthesis; D-alanine from L-alanine: step 1/1. In terms of biological role, catalyzes the interconversion of L-alanine and D-alanine. May also act on other amino acids. This chain is Alanine racemase (alr), found in Brucella canis (strain ATCC 23365 / NCTC 10854 / RM-666).